The sequence spans 287 residues: Energy-coupling factor transporter ATP-binding protein EcfA2 (287 aa).

In terms of domain architecture, ABC transporter spans 3 to 245; the sequence is IKFENVSYVY…SEWLQKHHLA (243 aa). ATP is bound at residue 40 to 47; it reads GHTGSGKS.

The protein belongs to the ABC transporter superfamily. Energy-coupling factor EcfA family. Forms a stable energy-coupling factor (ECF) transporter complex composed of 2 membrane-embedded substrate-binding proteins (S component), 2 ATP-binding proteins (A component) and 2 transmembrane proteins (T component).

It localises to the cell membrane. ATP-binding (A) component of a common energy-coupling factor (ECF) ABC-transporter complex. Unlike classic ABC transporters this ECF transporter provides the energy necessary to transport a number of different substrates. The chain is Energy-coupling factor transporter ATP-binding protein EcfA2 from Lactobacillus delbrueckii subsp. bulgaricus (strain ATCC 11842 / DSM 20081 / BCRC 10696 / JCM 1002 / NBRC 13953 / NCIMB 11778 / NCTC 12712 / WDCM 00102 / Lb 14).